Here is a 608-residue protein sequence, read N- to C-terminus: Elongation factor 4 (608 aa).

The 183-residue stretch at 11 to 193 (KKIRNFSIIA…QIVEKVPEPS (183 aa)) folds into the tr-type G domain. GTP-binding positions include 23–28 (DHGKST) and 140–143 (NKID).

This sequence belongs to the TRAFAC class translation factor GTPase superfamily. Classic translation factor GTPase family. LepA subfamily.

It localises to the cell membrane. The enzyme catalyses GTP + H2O = GDP + phosphate + H(+). Required for accurate and efficient protein synthesis under certain stress conditions. May act as a fidelity factor of the translation reaction, by catalyzing a one-codon backward translocation of tRNAs on improperly translocated ribosomes. Back-translocation proceeds from a post-translocation (POST) complex to a pre-translocation (PRE) complex, thus giving elongation factor G a second chance to translocate the tRNAs correctly. Binds to ribosomes in a GTP-dependent manner. The polypeptide is Elongation factor 4 (Listeria welshimeri serovar 6b (strain ATCC 35897 / DSM 20650 / CCUG 15529 / CIP 8149 / NCTC 11857 / SLCC 5334 / V8)).